Consider the following 321-residue polypeptide: Large ribosomal subunit protein uL3 (321 aa).

The protein belongs to the universal ribosomal protein uL3 family. As to quaternary structure, part of the 50S ribosomal subunit. Forms a cluster with proteins L14 and L24e.

In terms of biological role, one of the primary rRNA binding proteins, it binds directly near the 3'-end of the 23S rRNA, where it nucleates assembly of the 50S subunit. The polypeptide is Large ribosomal subunit protein uL3 (Nanoarchaeum equitans (strain Kin4-M)).